Here is a 382-residue protein sequence, read N- to C-terminus: Ribosomal RNA large subunit methyltransferase G (382 aa).

The protein belongs to the methyltransferase superfamily. RlmG family.

Its subcellular location is the cytoplasm. The catalysed reaction is guanosine(1835) in 23S rRNA + S-adenosyl-L-methionine = N(2)-methylguanosine(1835) in 23S rRNA + S-adenosyl-L-homocysteine + H(+). Functionally, specifically methylates the guanine in position 1835 (m2G1835) of 23S rRNA. In Pseudoalteromonas translucida (strain TAC 125), this protein is Ribosomal RNA large subunit methyltransferase G.